The chain runs to 487 residues: GDP-Man:Man(3)GlcNAc(2)-PP-Dol alpha-1,2-mannosyltransferase (487 aa).

Topologically, residues 1–16 (MAGILCLCGMMRLLTA) are lumenal. Residues 17-37 (LFIPVLIASIGLCLVLVLLFI) form a helical membrane-spanning segment. Topologically, residues 38–231 (CTRLWIQRKK…SNNPVLSRLK (194 aa)) are cytoplasmic. The helical intramembrane region spans 232-252 (LIYYYLFAVIYGWVGSCSDVI). The Cytoplasmic portion of the chain corresponds to 253 to 394 (MVNSTWTFAH…IGLHTMWNEH (142 aa)). The segment at residues 395 to 415 (FGIGIVECMAAGTIILAHNSG) is an intramembrane region (helical). At 416–487 (GPKLDIVVPY…FLASSEPLFM (72 aa)) the chain is on the cytoplasmic side.

It belongs to the glycosyltransferase group 1 family. Glycosyltransferase 4 subfamily.

Its subcellular location is the endoplasmic reticulum membrane. The enzyme catalyses an alpha-D-Man-(1-&gt;3)-[alpha-D-Man-(1-&gt;6)]-beta-D-Man-(1-&gt;4)-beta-D-GlcNAc-(1-&gt;4)-alpha-D-GlcNAc-diphospho-di-trans,poly-cis-dolichol + 2 GDP-alpha-D-mannose = an alpha-D-Man-(1-&gt;2)-alpha-D-Man-(1-&gt;2)-alpha-D-Man-(1-&gt;3)-[alpha-D-Man-(1-&gt;6)]-beta-D-Man-(1-&gt;4)-beta-D-GlcNAc-(1-&gt;4)-alpha-D-GlcNAc-diphospho-di-trans,poly-cis-dolichol + 2 GDP + 2 H(+). It participates in protein modification; protein glycosylation. GDP-Man:Man(3)GlcNAc(2)-PP-Dol alpha-1,2-mannosyltransferase that operates in the biosynthetic pathway of dolichol-linked oligosaccharides, the glycan precursors employed in protein asparagine (N)-glycosylation. The assembly of dolichol-linked oligosaccharides begins on the cytosolic side of the endoplasmic reticulum membrane and finishes in its lumen. The sequential addition of sugars to dolichol pyrophosphate produces dolichol-linked oligosaccharides containing fourteen sugars, including two GlcNAcs, nine mannoses and three glucoses. Once assembled, the oligosaccharide is transferred from the lipid to nascent proteins by oligosaccharyltransferases. Catalyzes, on the cytoplasmic face of the endoplasmic reticulum, the addition of the fourth and fifth mannose residues to the dolichol-linked oligosaccharide chain, to produce Man(5)GlcNAc(2)-PP-dolichol core oligosaccharide. Man(5)GlcNAc(2)-PP-dolichol is a substrate for ALG3, the following enzyme in the biosynthetic pathway. This Xenopus tropicalis (Western clawed frog) protein is GDP-Man:Man(3)GlcNAc(2)-PP-Dol alpha-1,2-mannosyltransferase (alg11).